We begin with the raw amino-acid sequence, 290 residues long: MDKIIKSISETGSFRAFVLDSTQTVKTAQEKHQTLSSSTVALGRTLIANQILAANQKGDSKITVKVIGDSSFGHIISVADTKGHVKGYIQNTGVDIKKTATGEVLVGPFMGNGHFVTIIDYGTGNPYTSTTPLITGEIGEDFAYYLTESEQTPSAVGLNVLLDEEDKVKVAGGFMVQALPGASEEEIARYEKRLQEMPAISTLLAAEDPSDALLSAIYGDEGYKRLSEDSLSFQCDCSKDRFESALMSLPNTDLQDMIDQDHGAEIICQFCQTRYQFSEDDLKGIINDKA.

Cystine bridges form between Cys-235–Cys-237 and Cys-268–Cys-271.

The protein belongs to the HSP33 family. In terms of processing, under oxidizing conditions two disulfide bonds are formed involving the reactive cysteines. Under reducing conditions zinc is bound to the reactive cysteines and the protein is inactive.

It is found in the cytoplasm. Redox regulated molecular chaperone. Protects both thermally unfolding and oxidatively damaged proteins from irreversible aggregation. Plays an important role in the bacterial defense system toward oxidative stress. The polypeptide is 33 kDa chaperonin (Streptococcus uberis (strain ATCC BAA-854 / 0140J)).